The sequence spans 192 residues: Ciliary microtubule inner protein 3 (192 aa).

A disordered region spans residues 24–108 (RAGAEGGPSL…SGQKVKAPHR (85 aa)). Positions 55–64 (APRRPPRPRT) are enriched in basic residues.

This sequence belongs to the CIMIP3-like family. As to expression, detected in the sperm flagellum (at protein level).

The protein resides in the cytoplasm. It localises to the cytoskeleton. The protein localises to the flagellum axoneme. The sequence is that of Ciliary microtubule inner protein 3 from Bos taurus (Bovine).